We begin with the raw amino-acid sequence, 545 residues long: Signal peptide peptidase-like 4 (545 aa).

Positions 1–25 are cleaved as a signal peptide; the sequence is MGTSSPEMAAALLLVMAALAGVAAG. The Lumenal segment spans residues 26–193; that stretch reads GDIVHQDDEA…PDRPLVDTAE (168 aa). N-linked (GlcNAc...) asparagine glycans are attached at residues Asn-81 and Asn-147. Positions 90–170 constitute a PA domain; that stretch reads PIDCCDPPTQ…PKDAGNDLQK (81 aa). The helical transmembrane segment at 194-214 threads the bilayer; it reads VFLWLMAVGTILCASYWSAWS. The Cytoplasmic segment spans residues 215–246; it reads AREAVIEQEKLLKDGHESSLNLEAGGSSGMVD. A helical transmembrane segment spans residues 247 to 267; that stretch reads INMTSAILFVVIASCFLIMLY. The Lumenal segment spans residues 268 to 276; that stretch reads KLMSHWFVE. A helical membrane pass occupies residues 277 to 297; it reads LLVVIFCIGGVEGLQTCLVAL. The Cytoplasmic portion of the chain corresponds to 298-317; the sequence is LSRWFKPAAESFVKVPFFGA. Residues 318–338 traverse the membrane as a helical segment; sequence VSYLTIAVCPFCIVFAVIWAV. At 339–343 the chain is on the lumenal side; that stretch reads YRRMT. A helical transmembrane segment spans residues 344–364; the sequence is YAWIGQDILGIALIVTVIQIV. Topologically, residues 365 to 373 are cytoplasmic; sequence RIPNLKVGS. A helical transmembrane segment spans residues 374–394; sequence VLLSCSFLYDIFWVFISKMWF. Asp-383 is a catalytic residue. The Lumenal segment spans residues 395-427; the sequence is HESVMIVVARGDKTDEDGVPMLLKIPRMFDPWG. The helical transmembrane segment at 428 to 448 threads the bilayer; it reads GFSIIGFGDILLPGLLIAFAL. Asp-436 is an active-site residue. Residues 449 to 460 lie on the Cytoplasmic side of the membrane; that stretch reads RYDWAAKKTLQS. The helical transmembrane segment at 461–481 threads the bilayer; sequence GYFLWSMVAYGSGLMITYVAL. The Lumenal segment spans residues 482-485; it reads NLMD. Residues 486-506 traverse the membrane as a helical segment; the sequence is GHGQPALLYIVPFTLGTFIAL. Residues 490–492 carry the PAL motif; that stretch reads PAL. The Cytoplasmic portion of the chain corresponds to 507-545; that stretch reads GRKRGELRNLWTRGQPERVCTHMHMQPSPKDTNCDAVSS.

This sequence belongs to the peptidase A22B family. Post-translationally, glycosylated.

The protein resides in the endosome membrane. Functionally, intramembrane-cleaving aspartic protease (I-CLiP) that cleaves type II membrane signal peptides in the hydrophobic plane of the membrane. The sequence is that of Signal peptide peptidase-like 4 (SPPL4) from Oryza sativa subsp. japonica (Rice).